We begin with the raw amino-acid sequence, 217 residues long: Probable transaldolase (217 aa).

Residue Lys-83 is the Schiff-base intermediate with substrate of the active site.

The protein belongs to the transaldolase family. Type 3B subfamily.

Its subcellular location is the cytoplasm. The catalysed reaction is D-sedoheptulose 7-phosphate + D-glyceraldehyde 3-phosphate = D-erythrose 4-phosphate + beta-D-fructose 6-phosphate. The protein operates within carbohydrate degradation; pentose phosphate pathway; D-glyceraldehyde 3-phosphate and beta-D-fructose 6-phosphate from D-ribose 5-phosphate and D-xylulose 5-phosphate (non-oxidative stage): step 2/3. Transaldolase is important for the balance of metabolites in the pentose-phosphate pathway. This chain is Probable transaldolase, found in Caulobacter sp. (strain K31).